Here is a 530-residue protein sequence, read N- to C-terminus: Calcium uptake protein 3, mitochondrial (530 aa).

The transit peptide at 1–43 directs the protein to the mitochondrion; that stretch reads MAALRRLLWPPPRVSPPLCAHQPLLGPWGRPAVTTLGLPGRPF. The interval 92–115 is disordered; sequence GSPATGRPSKSAATEPEDPPRGRG. Residues 232–267 form the EF-hand 1 domain; that stretch reads KPHAGFRIAFNMFDTDGNEMVDKKEFLVLQEIFRKK. Positions 245, 247, 249, 251, 253, and 256 each coordinate Ca(2+). The EF-hand 2; degenerate domain maps to 401-436; sequence VENTSVFLENVRYSIPEEKGITFDEFRSFFQFLNNL. Residues 470 to 505 form the EF-hand 3 domain; sequence FSPHLVNTVFKIFDVDKDDQLSYKEFIGIMKDRLHR. Aspartate 483, aspartate 485, aspartate 487, glutamine 489, and glutamate 494 together coordinate Ca(2+).

This sequence belongs to the MICU1 family. MICU3 subfamily. As to quaternary structure, heterodimer; disulfide-linked; heterodimerizes with MICU1. Component of the uniplex complex, composed of MCU, EMRE/SMDT1, MICU1 and MICU3 in a 4:4:1:1 stoichiometry. In terms of tissue distribution, specifically expressed in the central nervous system and skeletal muscle.

It is found in the mitochondrion intermembrane space. It localises to the mitochondrion inner membrane. Tissue-specific calcium sensor of the mitochondrial calcium uniporter (MCU) channel, which specifically regulates MCU channel activity in the central nervous system and skeletal muscle. Senses calcium level via its EF-hand domains: compared to MICU1 and MICU2, MICU3 has a higher affinity for calcium. MICU1 and MICU3 form a disulfide-linked heterodimer that stimulates and inhibits MCU activity, depending on the concentration of calcium. At low calcium levels, MICU1 occludes the pore of the MCU channel, preventing mitochondrial calcium uptake. At higher calcium levels, calcium-binding to MICU1 and MICU3 induces a conformational change that weakens MCU-MICU1 interactions and moves the MICU1-MICU3 heterodimer away from the pore, allowing calcium permeation through the MCU channel. The high calcium affinity of MICU3 lowers the calcium threshold necessary for calcium permeation through the MCU channel. The MICU1-MICU3 heterodimer promotes flexibility of neurotransmission in neuronal cells by enhancing mitochondrial calcium uptake in presynapses. It is also required to increase mitochondrial calcium uptake in skeletal muscle cells, thereby increasing ATP production. In Homo sapiens (Human), this protein is Calcium uptake protein 3, mitochondrial.